Reading from the N-terminus, the 461-residue chain is V-type ATP synthase beta chain (461 aa).

This sequence belongs to the ATPase alpha/beta chains family.

Its function is as follows. Produces ATP from ADP in the presence of a proton gradient across the membrane. The V-type beta chain is a regulatory subunit. This chain is V-type ATP synthase beta chain, found in Clostridium botulinum (strain ATCC 19397 / Type A).